The chain runs to 103 residues: Pyrimidine/purine nucleoside phosphorylase (103 aa).

It belongs to the nucleoside phosphorylase PpnP family.

The catalysed reaction is a purine D-ribonucleoside + phosphate = a purine nucleobase + alpha-D-ribose 1-phosphate. It catalyses the reaction adenosine + phosphate = alpha-D-ribose 1-phosphate + adenine. The enzyme catalyses cytidine + phosphate = cytosine + alpha-D-ribose 1-phosphate. It carries out the reaction guanosine + phosphate = alpha-D-ribose 1-phosphate + guanine. The catalysed reaction is inosine + phosphate = alpha-D-ribose 1-phosphate + hypoxanthine. It catalyses the reaction thymidine + phosphate = 2-deoxy-alpha-D-ribose 1-phosphate + thymine. The enzyme catalyses uridine + phosphate = alpha-D-ribose 1-phosphate + uracil. It carries out the reaction xanthosine + phosphate = alpha-D-ribose 1-phosphate + xanthine. Its function is as follows. Catalyzes the phosphorolysis of diverse nucleosides, yielding D-ribose 1-phosphate and the respective free bases. Can use uridine, adenosine, guanosine, cytidine, thymidine, inosine and xanthosine as substrates. Also catalyzes the reverse reactions. The polypeptide is Pyrimidine/purine nucleoside phosphorylase (Sulfurimonas denitrificans (strain ATCC 33889 / DSM 1251) (Thiomicrospira denitrificans (strain ATCC 33889 / DSM 1251))).